We begin with the raw amino-acid sequence, 261 residues long: Carbonic anhydrase 1 (261 aa).

The disordered stretch occupies residues 1–40; that stretch reads MASPDWGYDDKNGPEQWSKLYPIANGNNQSPVDIKTSETK. Residue Ala-2 is modified to N-acetylalanine. Positions 4–261 constitute an Alpha-carbonic anhydrase domain; sequence PDWGYDDKNG…LKGRTVRASF (258 aa). His-65 (proton donor/acceptor) is an active-site residue. Positions 95, 97, and 120 each coordinate Zn(2+). Substrate is bound by residues Thr-200 and 200–201; that span reads TH. The interval 241–261 is disordered; the sequence is PMQHNNRPTQPLKGRTVRASF.

This sequence belongs to the alpha-carbonic anhydrase family. Zn(2+) serves as cofactor.

Its subcellular location is the cytoplasm. The enzyme catalyses hydrogencarbonate + H(+) = CO2 + H2O. It catalyses the reaction urea = cyanamide + H2O. With respect to regulation, inhibited by acetazolamide. Catalyzes the reversible hydration of carbon dioxide. Can hydrate cyanamide to urea. In Pan troglodytes (Chimpanzee), this protein is Carbonic anhydrase 1 (CA1).